An 890-amino-acid chain; its full sequence is Nitrate reductase [NADH] 2 (890 aa).

Residue C165 coordinates Mo-molybdopterin. The region spanning 513 to 588 (SKMFSVSEVK…LEDYRIGELI (76 aa)) is the Cytochrome b5 heme-binding domain. Heme contacts are provided by H548 and H571. The region spanning 634–746 (RQKIPCKLVS…KGPLGHIEYT (113 aa)) is the FAD-binding FR-type domain. Residues 686–689 (RAYT), 703–707 (LIKVY), F708, F715, 720–722 (LMS), and T773 contribute to the FAD site.

This sequence belongs to the nitrate reductase family. Homodimer. It depends on FAD as a cofactor. Requires heme as cofactor. Mo-molybdopterin serves as cofactor.

It catalyses the reaction nitrite + NAD(+) + H2O = nitrate + NADH + H(+). Functionally, nitrate reductase is a key enzyme involved in the first step of nitrate assimilation in plants, fungi and bacteria. The chain is Nitrate reductase [NADH] 2 (NIA2) from Phaseolus vulgaris (Kidney bean).